Reading from the N-terminus, the 366-residue chain is Beta sliding clamp (366 aa).

Belongs to the beta sliding clamp family. In terms of assembly, forms a ring-shaped head-to-tail homodimer around DNA which binds and tethers DNA polymerases and other proteins to the DNA. The DNA replisome complex has a single clamp-loading complex (3 tau and 1 each of delta, delta', psi and chi subunits) which binds 3 Pol III cores (1 core on the leading strand and 2 on the lagging strand) each with a beta sliding clamp dimer. Additional proteins in the replisome are other copies of gamma, psi and chi, Ssb, DNA helicase and RNA primase.

It is found in the cytoplasm. Confers DNA tethering and processivity to DNA polymerases and other proteins. Acts as a clamp, forming a ring around DNA (a reaction catalyzed by the clamp-loading complex) which diffuses in an ATP-independent manner freely and bidirectionally along dsDNA. Initially characterized for its ability to contact the catalytic subunit of DNA polymerase III (Pol III), a complex, multichain enzyme responsible for most of the replicative synthesis in bacteria; Pol III exhibits 3'-5' exonuclease proofreading activity. The beta chain is required for initiation of replication as well as for processivity of DNA replication. This is Beta sliding clamp (dnaN) from Buchnera aphidicola subsp. Rhopalosiphum padi.